A 381-amino-acid polypeptide reads, in one-letter code: 3-dehydroquinate synthase (381 aa).

Residues 81 to 86, 115 to 119, 139 to 140, Lys152, and Lys161 each bind NAD(+); these read EGESSK, GVIGD, and TS. Positions 194, 256, and 274 each coordinate Zn(2+).

Belongs to the sugar phosphate cyclases superfamily. Dehydroquinate synthase family. The cofactor is Co(2+). Zn(2+) serves as cofactor. Requires NAD(+) as cofactor.

It is found in the cytoplasm. It carries out the reaction 7-phospho-2-dehydro-3-deoxy-D-arabino-heptonate = 3-dehydroquinate + phosphate. The protein operates within metabolic intermediate biosynthesis; chorismate biosynthesis; chorismate from D-erythrose 4-phosphate and phosphoenolpyruvate: step 2/7. Its function is as follows. Catalyzes the conversion of 3-deoxy-D-arabino-heptulosonate 7-phosphate (DAHP) to dehydroquinate (DHQ). The protein is 3-dehydroquinate synthase of Rhodopseudomonas palustris (strain TIE-1).